Consider the following 133-residue polypeptide: p53 and DNA damage-regulated protein 1 (133 aa).

This sequence belongs to the prefoldin subunit beta family. As to quaternary structure, component of the PAQosome complex which is responsible for the biogenesis of several protein complexes and which consists of R2TP complex members RUVBL1, RUVBL2, RPAP3 and PIH1D1, URI complex members PFDN2, PFDN6, PDRG1, UXT and URI1 as well as ASDURF, POLR2E and DNAAF10/WDR92.

The protein resides in the cytoplasm. May play a role in chaperone-mediated protein folding. This is p53 and DNA damage-regulated protein 1 (PDRG1) from Bos taurus (Bovine).